Reading from the N-terminus, the 787-residue chain is MNHKILKTLEYDKIKQMLQGYAITAFGQEQIATLEPINEADLIQIRLNQTKDGVDIERLKGGIPLPQLENIRPHLKRIEIGAMLNGSELAQIGRVLRATSAVVRFFDDLEKDELELKALPELVAQFVTLPQLTERIRSSVADDGAILDTASTKLRGLRTGLKQLEGQIRSRMASYTHGAKAKYLSDPIVTIRNDRYVIPVKQEYRGQFGGVVHDQSASGQTLFMEPQAIMELNNRLRQLQIEEQQEIERILAELSEAIMPERHNILANAELLGQLDFVNAKAQLAKALKATEPLINAENHVDLKQARHPLIDATKVVANDIAIGADYQAIVVTGPNTGGKTITLKTLGLVQVMAQSGLFITAREESQVGVFSDIFADIGDEQSIEQNLSTFSAHMENIIQILKQIDDRSLVLLDELGAGTDPQEGAALAIAILDQIGIVGANVVASTHYPELKIYGYNRPQTINASMEFDVATLQPTYRLLIGVPGRSNAFDISTRLGLPNSIVDQAKQLMNDESQDLNNMITDLENQRKAAETEYQALRHELTEATDLHQQLSTAYQQFFEDRETEMTKAKEKANAIVEKAEVKADKVITKLRDMQMNQGAQIKENQLIDAKAELGQLHQETTLKKNKVLQRAKRRQTLKVGDDVLVTSYGQRGTLIRQVDSKNWEVQMGIIKMKIANDDLEKQKVVEDNRPQRHVTTVNSGGARHVKAQLDLRGKRYEEAMAEVDQYIDAALLANYQQVTIVHGKGTGAIRQGVQEYLQANRQVKKYEYAPANAGGNGATIVTFK.

334–341 (GPNTGGKT) lines the ATP pocket. In terms of domain architecture, Smr spans 712–787 (LDLRGKRYEE…GNGATIVTFK (76 aa)).

It belongs to the DNA mismatch repair MutS family. MutS2 subfamily. In terms of assembly, homodimer. Binds to stalled ribosomes, contacting rRNA.

Its function is as follows. Endonuclease that is involved in the suppression of homologous recombination and thus may have a key role in the control of bacterial genetic diversity. In terms of biological role, acts as a ribosome collision sensor, splitting the ribosome into its 2 subunits. Detects stalled/collided 70S ribosomes which it binds and splits by an ATP-hydrolysis driven conformational change. Acts upstream of the ribosome quality control system (RQC), a ribosome-associated complex that mediates the extraction of incompletely synthesized nascent chains from stalled ribosomes and their subsequent degradation. Probably generates substrates for RQC. The sequence is that of Endonuclease MutS2 from Latilactobacillus sakei subsp. sakei (strain 23K) (Lactobacillus sakei subsp. sakei).